Reading from the N-terminus, the 419-residue chain is L-rhamnose isomerase (419 aa).

3 residues coordinate Mn(2+): His262, Asp294, and Asp296.

Belongs to the rhamnose isomerase family. In terms of assembly, homotetramer. Mn(2+) serves as cofactor.

It is found in the cytoplasm. The enzyme catalyses L-rhamnopyranose = L-rhamnulose. Its pathway is carbohydrate degradation; L-rhamnose degradation; glycerone phosphate from L-rhamnose: step 1/3. Its function is as follows. Catalyzes the interconversion of L-rhamnose and L-rhamnulose. The chain is L-rhamnose isomerase from Escherichia fergusonii (strain ATCC 35469 / DSM 13698 / CCUG 18766 / IAM 14443 / JCM 21226 / LMG 7866 / NBRC 102419 / NCTC 12128 / CDC 0568-73).